A 187-amino-acid chain; its full sequence is ATP-dependent protease subunit HslV (187 aa).

T13 is a catalytic residue. Positions 172, 175, and 178 each coordinate Na(+).

This sequence belongs to the peptidase T1B family. HslV subfamily. A double ring-shaped homohexamer of HslV is capped on each side by a ring-shaped HslU homohexamer. The assembly of the HslU/HslV complex is dependent on binding of ATP.

It is found in the cytoplasm. The enzyme catalyses ATP-dependent cleavage of peptide bonds with broad specificity.. With respect to regulation, allosterically activated by HslU binding. Functionally, protease subunit of a proteasome-like degradation complex believed to be a general protein degrading machinery. This chain is ATP-dependent protease subunit HslV, found in Caulobacter sp. (strain K31).